A 539-amino-acid chain; its full sequence is CTP synthase (539 aa).

The tract at residues 1 to 267 (MTKYIFVTGG…DQKVVDFLHI (267 aa)) is amidoligase domain. Ser-13 lines the CTP pocket. Ser-13 is a UTP binding site. 14–19 (SLGKGI) is an ATP binding site. Position 54 (Tyr-54) interacts with L-glutamine. Asp-71 contacts ATP. Asp-71 and Glu-141 together coordinate Mg(2+). CTP contacts are provided by residues 148–150 (DME), 188–193 (KSKPTQ), and Lys-224. UTP contacts are provided by residues 188-193 (KSKPTQ) and Lys-224. One can recognise a Glutamine amidotransferase type-1 domain in the interval 294-537 (KITLVGKYVE…IGAASGLQVD (244 aa)). Gly-356 contributes to the L-glutamine binding site. Cys-383 (nucleophile; for glutamine hydrolysis) is an active-site residue. L-glutamine is bound by residues 384 to 387 (LGMQ), Glu-407, and Arg-465. Residues His-510 and Glu-512 contribute to the active site.

It belongs to the CTP synthase family. In terms of assembly, homotetramer.

It catalyses the reaction UTP + L-glutamine + ATP + H2O = CTP + L-glutamate + ADP + phosphate + 2 H(+). The enzyme catalyses L-glutamine + H2O = L-glutamate + NH4(+). It carries out the reaction UTP + NH4(+) + ATP = CTP + ADP + phosphate + 2 H(+). The protein operates within pyrimidine metabolism; CTP biosynthesis via de novo pathway; CTP from UDP: step 2/2. Allosterically activated by GTP, when glutamine is the substrate; GTP has no effect on the reaction when ammonia is the substrate. The allosteric effector GTP functions by stabilizing the protein conformation that binds the tetrahedral intermediate(s) formed during glutamine hydrolysis. Inhibited by the product CTP, via allosteric rather than competitive inhibition. Functionally, catalyzes the ATP-dependent amination of UTP to CTP with either L-glutamine or ammonia as the source of nitrogen. Regulates intracellular CTP levels through interactions with the four ribonucleotide triphosphates. In Lactobacillus delbrueckii subsp. bulgaricus (strain ATCC BAA-365 / Lb-18), this protein is CTP synthase.